Here is a 115-residue protein sequence, read N- to C-terminus: NADH-ubiquinone oxidoreductase chain 3 (115 aa).

Transmembrane regions (helical) follow at residues L3–W23, F55–L75, and T86–W106.

The protein belongs to the complex I subunit 3 family. As to quaternary structure, core subunit of respiratory chain NADH dehydrogenase (Complex I) which is composed of 45 different subunits. Interacts with TMEM186. Interacts with TMEM242.

It localises to the mitochondrion inner membrane. The catalysed reaction is a ubiquinone + NADH + 5 H(+)(in) = a ubiquinol + NAD(+) + 4 H(+)(out). In terms of biological role, core subunit of the mitochondrial membrane respiratory chain NADH dehydrogenase (Complex I) which catalyzes electron transfer from NADH through the respiratory chain, using ubiquinone as an electron acceptor. Essential for the catalytic activity of complex I. This chain is NADH-ubiquinone oxidoreductase chain 3, found in Rattus norvegicus (Rat).